We begin with the raw amino-acid sequence, 245 residues long: tRNA1(Val) (adenine(37)-N6)-methyltransferase (245 aa).

It belongs to the methyltransferase superfamily. tRNA (adenine-N(6)-)-methyltransferase family.

It is found in the cytoplasm. It catalyses the reaction adenosine(37) in tRNA1(Val) + S-adenosyl-L-methionine = N(6)-methyladenosine(37) in tRNA1(Val) + S-adenosyl-L-homocysteine + H(+). Specifically methylates the adenine in position 37 of tRNA(1)(Val) (anticodon cmo5UAC). The polypeptide is tRNA1(Val) (adenine(37)-N6)-methyltransferase (Escherichia coli O6:K15:H31 (strain 536 / UPEC)).